The primary structure comprises 343 residues: Small ribosomal subunit biogenesis GTPase RsgA (343 aa).

Residues 116–275 (RGQLKPVAAN…LIDSPGIREF (160 aa)) form the CP-type G domain. Residues 163-166 (NKAD) and 217-225 (GQSGVGKSS) contribute to the GTP site. The Zn(2+) site is built by cysteine 299, cysteine 304, histidine 306, and cysteine 312.

It belongs to the TRAFAC class YlqF/YawG GTPase family. RsgA subfamily. Monomer. Associates with 30S ribosomal subunit, binds 16S rRNA. Requires Zn(2+) as cofactor.

The protein resides in the cytoplasm. Functionally, one of several proteins that assist in the late maturation steps of the functional core of the 30S ribosomal subunit. Helps release RbfA from mature subunits. May play a role in the assembly of ribosomal proteins into the subunit. Circularly permuted GTPase that catalyzes slow GTP hydrolysis, GTPase activity is stimulated by the 30S ribosomal subunit. This chain is Small ribosomal subunit biogenesis GTPase RsgA, found in Pseudomonas savastanoi pv. phaseolicola (strain 1448A / Race 6) (Pseudomonas syringae pv. phaseolicola (strain 1448A / Race 6)).